The chain runs to 192 residues: Large ribosomal subunit protein bL25 (192 aa).

The protein belongs to the bacterial ribosomal protein bL25 family. CTC subfamily. Part of the 50S ribosomal subunit; part of the 5S rRNA/L5/L18/L25 subcomplex. Contacts the 5S rRNA. Binds to the 5S rRNA independently of L5 and L18.

In terms of biological role, this is one of the proteins that binds to the 5S RNA in the ribosome where it forms part of the central protuberance. The protein is Large ribosomal subunit protein bL25 of Porphyromonas gingivalis (strain ATCC 33277 / DSM 20709 / CIP 103683 / JCM 12257 / NCTC 11834 / 2561).